A 325-amino-acid chain; its full sequence is tRNA(Ile)-lysidine synthase (325 aa).

34–39 is a binding site for ATP; the sequence is SGGADS.

This sequence belongs to the tRNA(Ile)-lysidine synthase family.

Its subcellular location is the cytoplasm. The enzyme catalyses cytidine(34) in tRNA(Ile2) + L-lysine + ATP = lysidine(34) in tRNA(Ile2) + AMP + diphosphate + H(+). Functionally, ligates lysine onto the cytidine present at position 34 of the AUA codon-specific tRNA(Ile) that contains the anticodon CAU, in an ATP-dependent manner. Cytidine is converted to lysidine, thus changing the amino acid specificity of the tRNA from methionine to isoleucine. This is tRNA(Ile)-lysidine synthase from Rhodococcus jostii (strain RHA1).